Reading from the N-terminus, the 202-residue chain is METYIQESDISNEDDLKAFCDMYLRQNLASTDAIIAQEAYRLAKENDLQGLIRLENICHAIKLSPETRKGSMMMGRQFLQTVQPLNNSELFTIWCEKLKNKEIKSHYPVVYGIYTAMLGVDLRTSLETFLYSSITSLVQNGVRAIPLGQNSGVQTIFSLLPVIQETTSRVMTLDLEHLDNNSIGLEIASMKHEFLHSRLFIS.

The protein belongs to the UreF family. UreD, UreF and UreG form a complex that acts as a GTP-hydrolysis-dependent molecular chaperone, activating the urease apoprotein by helping to assemble the nickel containing metallocenter of UreC. The UreE protein probably delivers the nickel.

The protein localises to the cytoplasm. Functionally, required for maturation of urease via the functional incorporation of the urease nickel metallocenter. This is Urease accessory protein UreF from Sporosarcina pasteurii (Bacillus pasteurii).